We begin with the raw amino-acid sequence, 332 residues long: Ribose operon repressor (332 aa).

One can recognise an HTH lacI-type domain in the interval 2-56; it reads ATMKDIARLAQVSTSTVSHVINGSRFVSDEIREKVMRIVAELNYTPSAVARSLKV. Positions 4–23 form a DNA-binding region, H-T-H motif; that stretch reads MKDIARLAQVSTSTVSHVIN.

Transcriptional repressor for the ribose rbsDACBK operon. This Haemophilus influenzae (strain ATCC 51907 / DSM 11121 / KW20 / Rd) protein is Ribose operon repressor (rbsR).